The primary structure comprises 212 residues: External core antigen (212 aa).

The signal sequence occupies residues 1 to 19 (MQLFHLCLIISCSCPTVQA). The interval 25–27 (GWL) is HBEAG. The segment at 165–212 (NAPILSTLPETTVVRRRGRSPRRRTPSPRRRRSQSPRRRRSQSPASQC) is disordered. Residues 178–205 (VRRRGRSPRRRTPSPRRRRSQSPRRRRS) are compositionally biased toward basic residues. One copy of the 1; half-length repeat lies at 184 to 190 (SPRRRTP). A 3 X 8 AA repeats of S-P-R-R-R-R-S-Q region spans residues 184-206 (SPRRRTPSPRRRRSQSPRRRRSQ). Positions 184-212 (SPRRRTPSPRRRRSQSPRRRRSQSPASQC) are excised as a propeptide. Tandem repeats lie at residues 191–198 (SPRRRRSQ) and 199–206 (SPRRRRSQ).

Belongs to the orthohepadnavirus precore antigen family. Homodimerizes. Phosphorylated. In terms of processing, cleaved by host furin.

Its subcellular location is the secreted. It is found in the host nucleus. May regulate immune response to the intracellular capsid in acting as a T-cell tolerogen, by having an immunoregulatory effect which prevents destruction of infected cells by cytotoxic T-cells. This immune regulation may predispose to chronicity during perinatal infections and prevent severe liver injury during adult infections. The sequence is that of External core antigen from Gibbon hepatitis B virus subtype ayw3q (isolate Hope) (HBVgbn).